A 1715-amino-acid polypeptide reads, in one-letter code: MGTLLPPVGSEVFRRFTPSSLNEIQQRQQIKEERKRANAEVSEELFSEPASDLEAGKPLPFIYGEPPHELLNVPLEDMDPFYQSQKTFIVLSKGNVIHRFNAESSLYLLSPFNSMRIFAIKILVHSLFSLFIMATILTNCVFMTLSDPPAWSKTVEYVFTFIYTFEATIKVVSRGFCVGQFTFLKDPWNWLDFMVISMAYLTELVDLGNVSVLRTFRVLRALKTITVIPGLKTIVGALIQSVKKLADAMVLTVFCLSVFALIGLQLFMGNLRQKCVLIPPVVSNLTFEVTNSSHGYFGNDTRGNDTENKDLMFEFEEHINNPDNYYYLAGQRDPLLCGNSSDAGVCPESYICLKVGRNPNYGYTSYDSFGWAFLALFRLMTQDFWENLFQLTLRAAGKTYMIFFVVVIFLGSFYLINLILAVVAMAYAEQNQATMAEAKQKEEEYLHILEALKKREEEQAAWKEALKVQEPHNFEDDHKLCPPCWYAFANVFLKWDCCSCWRHLKRCLSAIVMDPFVDLGITICIILNTIFMAMEHYPMSADFEELLSVGNLVFTGIFTCEMVLKILAMDPYFYFQVGWNIFDSIIVTMSLVELGLANVQGLSVLRSFRLMRVFKLAKSWPTLNMLIKIIGNSVGALGNLTLVLAIIVFIFAVVGMQLFGKNYKDCVCRISEDCKLPRWHMNDFFHAFLIIFRVLCGEWIDTMWDCMEVSGQTMCLIVYMMVLVIGNLVVLNLFLALLLSSFSGDNLAAQDDEGENNLQIAVNRIKRAVAWAKTWILLHLCILTESNHNQHDAVSDEEENRITKNILALTSVTSDQFFKVPIAEAESDSEDSDDDDVDEDKHSRCDESSFCSTVQDPEVKENEADEDNVSKMPMDCWSENCYSRCPSLDIDTSQGKGKVWCNIRRACFIIVENNYFESFIVFMILLSSGALAFEDIYLEKHQLIKTILEYADKVFTYVFVVEMVLKWFAYGFKSYFSNAWCWLDFLIVDVSLVSLTANILGYSELGAIKSLRTLRALRPLRALSRFEGMRVVVNALVGAVPSIFNVLLVCLIFWLIFSIMGVNLFAGKFSYCFNETSQEQFDKKIVNNKTECIALIEANFTEVRWKNLKVNYDNVGIGYLSLLQVATFKGWMEIMYAAVDSRDVESQPIYEVNIYMYLYFVIFIIFGSFFTLNLFIGVIIDNFNQQKAKLGGQDIFMTEEQKKYYNAMKKLGSKKPQKPVPRPENALQGLVFDLVTKQIFDVFIMVLICLNMVTMMVETDEQTKEKEDILYWINVIFIVIFTTECILKTIALRRHYFSIGWNVFDFVVVILSILGLLLADIIEKYFVSPTLFRVIRLARIGRVLRLIRGAKGIRTLLFALMMSLPALFNIGLLLFLIMFIFSIFGMSNFAYVKKEAMIDDMFNFETFGNSMICLFMITTSAGWDGLLSPIMNKPPDCDPDLENPGTTVRGNCGSPAIGIVFFSTYIIMSFLVVVNMYIAIILENFNVATEESSDPLCEDDFDMFYETWEKFDPDATQFIQYSKLSDFCDTLKEPLRIPKPNTIKLISLDLPLVPGDKIHCMDILLALTAEVLGDSDEMDTLKATMEEKFMANNPSKVSYEPISSTLRRKEEEVAARVIQRAYRKYLLQRTVRLASFTYREKTEGWGTKKAPETEGLLCKQFNQLFGNKRETEEPLMSKNDELGQVELQSEVLLHAAPPLNTLELLLGTSERESLV.

The Cytoplasmic segment spans residues 1–126 (MGTLLPPVGS…IFAIKILVHS (126 aa)). The I repeat unit spans residues 108–431 (LLSPFNSMRI…VVAMAYAEQN (324 aa)). The chain crosses the membrane as a helical span at residues 127–145 (LFSLFIMATILTNCVFMTL). At 146-152 (SDPPAWS) the chain is on the extracellular side. A helical membrane pass occupies residues 153–173 (KTVEYVFTFIYTFEATIKVVS). Residues 174–187 (RGFCVGQFTFLKDP) are Cytoplasmic-facing. A helical membrane pass occupies residues 188–205 (WNWLDFMVISMAYLTELV). Topologically, residues 206-211 (DLGNVS) are extracellular. Asn209 is a glycosylation site (N-linked (GlcNAc...) asparagine). Residues 212 to 228 (VLRTFRVLRALKTITVI) form a helical membrane-spanning segment. At 229–247 (PGLKTIVGALIQSVKKLAD) the chain is on the cytoplasmic side. Residues 248-267 (AMVLTVFCLSVFALIGLQLF) form a helical membrane-spanning segment. Residues 268–368 (MGNLRQKCVL…PNYGYTSYDS (101 aa)) lie on the Extracellular side of the membrane. Residues Cys275 and Cys337 are joined by a disulfide bond. N-linked (GlcNAc...) asparagine glycans are attached at residues Asn284, Asn304, and Asn339. Cys346 and Cys352 are oxidised to a cystine. Positions 369 to 393 (FGWAFLALFRLMTQDFWENLFQLTL) form an intramembrane region, pore-forming. Over 394–400 (RAAGKTY) the chain is Extracellular. Residues 401–421 (MIFFVVVIFLGSFYLINLILA) form a helical membrane-spanning segment. The Cytoplasmic portion of the chain corresponds to 422-515 (VVAMAYAEQN…RCLSAIVMDP (94 aa)). The stretch at 497–768 (CCSCWRHLKR…QIAVNRIKRA (272 aa)) is one II repeat. A helical membrane pass occupies residues 516–534 (FVDLGITICIILNTIFMAM). Over 535-545 (EHYPMSADFEE) the chain is Extracellular. A helical membrane pass occupies residues 546-565 (LLSVGNLVFTGIFTCEMVLK). Topologically, residues 566–579 (ILAMDPYFYFQVGW) are cytoplasmic. The chain crosses the membrane as a helical span at residues 580–599 (NIFDSIIVTMSLVELGLANV). Over 600-601 (QG) the chain is Extracellular. Residues 602–619 (LSVLRSFRLMRVFKLAKS) traverse the membrane as a helical segment. The Cytoplasmic portion of the chain corresponds to 620–635 (WPTLNMLIKIIGNSVG). The helical transmembrane segment at 636-654 (ALGNLTLVLAIIVFIFAVV) threads the bilayer. Over 655-683 (GMQLFGKNYKDCVCRISEDCKLPRWHMND) the chain is Extracellular. Cys668 and Cys674 are oxidised to a cystine. An intramembrane region (pore-forming) is located at residues 684–704 (FFHAFLIIFRVLCGEWIDTMW). Over 705–715 (DCMEVSGQTMC) the chain is Extracellular. An intrachain disulfide couples Cys706 to Cys715. Residues 716-734 (LIVYMMVLVIGNLVVLNLF) traverse the membrane as a helical segment. Topologically, residues 735–915 (LALLLSSFSG…ACFIIVENNY (181 aa)) are cytoplasmic. The disordered stretch occupies residues 824–865 (EAESDSEDSDDDDVDEDKHSRCDESSFCSTVQDPEVKENEAD). Residues 825 to 838 (AESDSEDSDDDDVD) show a composition bias toward acidic residues. The III repeat unit spans residues 896–1211 (KGKVWCNIRR…KKYYNAMKKL (316 aa)). Residues 916–933 (FESFIVFMILLSSGALAF) form a helical membrane-spanning segment. Residues 934–946 (EDIYLEKHQLIKT) are Extracellular-facing. The helical transmembrane segment at 947–965 (ILEYADKVFTYVFVVEMVL) threads the bilayer. At 966-979 (KWFAYGFKSYFSNA) the chain is on the cytoplasmic side. A helical transmembrane segment spans residues 980-998 (WCWLDFLIVDVSLVSLTAN). Topologically, residues 999–1006 (ILGYSELG) are extracellular. Residues 1007–1025 (AIKSLRTLRALRPLRALSR) traverse the membrane as a helical segment. Topologically, residues 1026–1042 (FEGMRVVVNALVGAVPS) are cytoplasmic. A helical transmembrane segment spans residues 1043 to 1062 (IFNVLLVCLIFWLIFSIMGV). Residues 1063–1115 (NLFAGKFSYCFNETSQEQFDKKIVNNKTECIALIEANFTEVRWKNLKVNYDNV) lie on the Extracellular side of the membrane. Cys1072 and Cys1092 are oxidised to a cystine. 2 N-linked (GlcNAc...) asparagine glycosylation sites follow: Asn1074 and Asn1088. Residues 1116–1137 (GIGYLSLLQVATFKGWMEIMYA) constitute an intramembrane region (pore-forming). Residues 1138 to 1154 (AVDSRDVESQPIYEVNI) are Extracellular-facing. Residues 1155 to 1176 (YMYLYFVIFIIFGSFFTLNLFI) traverse the membrane as a helical segment. Over 1177 to 1239 (GVIIDNFNQQ…LVFDLVTKQI (63 aa)) the chain is Cytoplasmic. The important for rapid channel inactivation stretch occupies residues 1195-1197 (IFM). The stretch at 1220–1517 (VPRPENALQG…WEKFDPDATQ (298 aa)) is one IV repeat. A helical membrane pass occupies residues 1240–1257 (FDVFIMVLICLNMVTMMV). Over 1258-1268 (ETDEQTKEKED) the chain is Extracellular. Residues 1269 to 1287 (ILYWINVIFIVIFTTECIL) traverse the membrane as a helical segment. The Cytoplasmic portion of the chain corresponds to 1288–1299 (KTIALRRHYFSI). Residues 1300–1317 (GWNVFDFVVVILSILGLL) form a helical membrane-spanning segment. Residues 1318 to 1330 (LADIIEKYFVSPT) lie on the Extracellular side of the membrane. A helical transmembrane segment spans residues 1331 to 1347 (LFRVIRLARIGRVLRLI). Residues 1348–1366 (RGAKGIRTLLFALMMSLPA) lie on the Cytoplasmic side of the membrane. Residues 1367-1384 (LFNIGLLLFLIMFIFSIF) form a helical membrane-spanning segment. Residues 1385–1406 (GMSNFAYVKKEAMIDDMFNFET) lie on the Extracellular side of the membrane. The segment at residues 1407 to 1429 (FGNSMICLFMITTSAGWDGLLSP) is an intramembrane region (pore-forming). The Extracellular segment spans residues 1430-1458 (IMNKPPDCDPDLENPGTTVRGNCGSPAIG). Cys1437 and Cys1452 are joined by a disulfide. A helical membrane pass occupies residues 1459–1481 (IVFFSTYIIMSFLVVVNMYIAII). Residues 1482 to 1715 (LENFNVATEE…LGTSERESLV (234 aa)) lie on the Cytoplasmic side of the membrane. One can recognise an IQ domain in the interval 1611–1640 (EEVAARVIQRAYRKYLLQRTVRLASFTYRE).

It belongs to the sodium channel (TC 1.A.1.10) family. Nav1.4/SCN4A subfamily. Voltage-gated sodium (Nav) channels consist of an ion-conducting alpha subunit which is functional on its own associated with regulatory beta subunits.

The protein resides in the cell membrane. It catalyses the reaction Na(+)(in) = Na(+)(out). Its function is as follows. Pore-forming subunit of a voltage-gated sodium (Nav) channel that directly mediates the depolarizing phase of action potentials in excitable membranes. Navs, also called VGSCs (voltage-gated sodium channels) or VDSCs (voltage-dependent sodium channels), operate by switching between closed and open conformations depending on the voltage difference across the membrane. In the open conformation they allow Na(+) ions to selectively pass through the pore, along their electrochemical gradient. The influx of Na+ ions provokes membrane depolarization, initiating the propagation of electrical signals throughout cells and tissues. The polypeptide is Sodium channel protein type 4 subunit alpha B (scn4ab) (Tetraodon nigroviridis (Spotted green pufferfish)).